Here is a 280-residue protein sequence, read N- to C-terminus: Pantothenate synthetase (280 aa).

30–37 (MGALHEGH) contacts ATP. His-37 serves as the catalytic Proton donor. Gln-61 is a (R)-pantoate binding site. Gln-61 lines the beta-alanine pocket. Position 147–150 (147–150 (GQKD)) interacts with ATP. Residue Gln-153 coordinates (R)-pantoate. ATP is bound by residues Val-176 and 184-187 (MSSR).

Belongs to the pantothenate synthetase family. As to quaternary structure, homodimer.

It is found in the cytoplasm. The enzyme catalyses (R)-pantoate + beta-alanine + ATP = (R)-pantothenate + AMP + diphosphate + H(+). The protein operates within cofactor biosynthesis; (R)-pantothenate biosynthesis; (R)-pantothenate from (R)-pantoate and beta-alanine: step 1/1. Its function is as follows. Catalyzes the condensation of pantoate with beta-alanine in an ATP-dependent reaction via a pantoyl-adenylate intermediate. The chain is Pantothenate synthetase from Thermodesulfovibrio yellowstonii (strain ATCC 51303 / DSM 11347 / YP87).